Consider the following 299-residue polypeptide: Light-independent protochlorophyllide reductase iron-sulfur ATP-binding protein (299 aa).

Residues 1-23 (MSPLDRTPPSLRGQDGEGSVQVH) are disordered. Residues 43 to 48 (GIGKST) and K72 contribute to the ATP site. S47 provides a ligand contact to Mg(2+). Positions 128 and 162 each coordinate [4Fe-4S] cluster. ATP is bound by residues 213–214 (NR) and 237–239 (PDL).

The protein belongs to the NifH/BchL/ChlL family. As to quaternary structure, homodimer. Protochlorophyllide reductase is composed of three subunits; BchL, BchN and BchB. It depends on [4Fe-4S] cluster as a cofactor.

It carries out the reaction chlorophyllide a + oxidized 2[4Fe-4S]-[ferredoxin] + 2 ADP + 2 phosphate = protochlorophyllide a + reduced 2[4Fe-4S]-[ferredoxin] + 2 ATP + 2 H2O. It participates in porphyrin-containing compound metabolism; bacteriochlorophyll biosynthesis (light-independent). Functionally, component of the dark-operative protochlorophyllide reductase (DPOR) that uses Mg-ATP and reduced ferredoxin to reduce ring D of protochlorophyllide (Pchlide) to form chlorophyllide a (Chlide). This reaction is light-independent. The L component serves as a unique electron donor to the NB-component of the complex, and binds Mg-ATP. The sequence is that of Light-independent protochlorophyllide reductase iron-sulfur ATP-binding protein from Roseobacter denitrificans (strain ATCC 33942 / OCh 114) (Erythrobacter sp. (strain OCh 114)).